A 329-amino-acid polypeptide reads, in one-letter code: tRNA dimethylallyltransferase (329 aa).

24–31 serves as a coordination point for ATP; it reads GSTGIGKT. 26–31 contributes to the substrate binding site; the sequence is TGIGKT. Positions 49 to 52 are interaction with substrate tRNA; sequence DSMQ.

Belongs to the IPP transferase family. In terms of assembly, monomer. Mg(2+) is required as a cofactor.

It catalyses the reaction adenosine(37) in tRNA + dimethylallyl diphosphate = N(6)-dimethylallyladenosine(37) in tRNA + diphosphate. In terms of biological role, catalyzes the transfer of a dimethylallyl group onto the adenine at position 37 in tRNAs that read codons beginning with uridine, leading to the formation of N6-(dimethylallyl)adenosine (i(6)A). In Methylacidiphilum infernorum (isolate V4) (Methylokorus infernorum (strain V4)), this protein is tRNA dimethylallyltransferase.